Reading from the N-terminus, the 516-residue chain is Bifunctional purine biosynthesis protein PurH (516 aa).

The region spanning 1-146 (MAPFALLSVS…KNHADVAVLT (146 aa)) is the MGS-like domain.

It belongs to the PurH family.

It catalyses the reaction (6R)-10-formyltetrahydrofolate + 5-amino-1-(5-phospho-beta-D-ribosyl)imidazole-4-carboxamide = 5-formamido-1-(5-phospho-D-ribosyl)imidazole-4-carboxamide + (6S)-5,6,7,8-tetrahydrofolate. The enzyme catalyses IMP + H2O = 5-formamido-1-(5-phospho-D-ribosyl)imidazole-4-carboxamide. The protein operates within purine metabolism; IMP biosynthesis via de novo pathway; 5-formamido-1-(5-phospho-D-ribosyl)imidazole-4-carboxamide from 5-amino-1-(5-phospho-D-ribosyl)imidazole-4-carboxamide (10-formyl THF route): step 1/1. It participates in purine metabolism; IMP biosynthesis via de novo pathway; IMP from 5-formamido-1-(5-phospho-D-ribosyl)imidazole-4-carboxamide: step 1/1. This chain is Bifunctional purine biosynthesis protein PurH, found in Parasynechococcus marenigrum (strain WH8102).